A 383-amino-acid polypeptide reads, in one-letter code: 23S rRNA (uracil(747)-C(5))-methyltransferase RlmC (383 aa).

Residues C3, C11, C14, and C89 each contribute to the [4Fe-4S] cluster site. Residues Q214, F243, E270, and N315 each coordinate S-adenosyl-L-methionine. C342 acts as the Nucleophile in catalysis.

Belongs to the class I-like SAM-binding methyltransferase superfamily. RNA M5U methyltransferase family. RlmC subfamily.

The catalysed reaction is uridine(747) in 23S rRNA + S-adenosyl-L-methionine = 5-methyluridine(747) in 23S rRNA + S-adenosyl-L-homocysteine + H(+). Functionally, catalyzes the formation of 5-methyl-uridine at position 747 (m5U747) in 23S rRNA. This chain is 23S rRNA (uracil(747)-C(5))-methyltransferase RlmC, found in Actinobacillus succinogenes (strain ATCC 55618 / DSM 22257 / CCUG 43843 / 130Z).